The chain runs to 1450 residues: ABC transporter G family member 37 (1450 aa).

The ABC transporter 1 domain occupies 175–447; it reads VKLTGAKTHE…FEDCGFRCPE (273 aa). 207 to 214 contributes to the ATP binding site; the sequence is GPPSCGKT. Residues 525-737 enclose the ABC transmembrane type-2 1 domain; sequence ELFIACISRE…GEIGLSVNEF (213 aa). A run of 6 helical transmembrane segments spans residues 544–564, 581–601, 615–635, 661–681, 687–707, and 773–793; these read VYIF…TVFI, ALFF…SMTA, FYPA…LSFF, FILL…LAAI, ASIT…GFVI, and LCAL…ALTF. Residues 810 to 838 form a disordered region; that stretch reads SELQGTEKSTEDSSVRKKTTDSPVKTEEE. Over residues 817–838 the composition is skewed to basic and acidic residues; sequence KSTEDSSVRKKTTDSPVKTEEE. Residues 850–1103 form the ABC transporter 2 domain; it reads VTFQDLNYFV…IIEYFESVPE (254 aa). 895–902 lines the ATP pocket; that stretch reads GVSGAGKT. An ABC transmembrane type-2 2 domain is found at 1175-1389; it reads GQFKSILWKM…TLNGFISSQY (215 aa). 7 consecutive transmembrane segments (helical) span residues 1194–1214, 1226–1246, 1282–1302, 1313–1333, 1339–1359, 1365–1385, and 1422–1442; these read YNLM…ALFW, MFTV…NNCA, IPYI…MIGF, LYSM…LVSI, VAAI…GFLI, PGWW…NGFI, and VTAV…AFFV.

This sequence belongs to the ABC transporter superfamily. ABCG family. PDR (TC 3.A.1.205) subfamily. As to expression, expressed in roots and, to a lower extent, in seedlings.

It is found in the cell membrane. Together with ABCG36, regulates auxin homeostasis and responses by playing a dual role in coumarin (and derivatives) and in the auxin precursor indole 3-butyric acid (IBA) efflux transport, thus influencing roots and root hairs development. Mediates coumarin exudation in the rhizosphere, especially in iron (Fe) deficient conditions, with a strong specificity for highly oxygenated compounds such as scopoletin and derivatives, dihydroxyscopoletin, esculetin, fraxin, fraxetin and esculin; these molecules improve plant Fe nutrition. Involved in the cellular detoxification of xenobiotics by promoting the excretion of some auxinic herbicides including 2,4-dichlorophenoxyacetic acid (2,4-D), 4-(2,4-dichlorophenoxy)butyric acid (2,4-DB) and other members of the phenoxyalkanoic acid family as well as the polar auxin transport inhibitor, napthylphthalamic acid (NPA). May be a general defense protein. This Arabidopsis thaliana (Mouse-ear cress) protein is ABC transporter G family member 37.